We begin with the raw amino-acid sequence, 558 residues long: Small ribosomal subunit protein bS1 (558 aa).

S1 motif domains are found at residues 21–87 (GSII…LSRE), 105–171 (SETV…VSRR), 192–260 (GMHV…LGLK), 277–347 (ETKL…LGLK), 364–434 (GVHV…LGIK), and 451–520 (GAII…LTIH).

The protein belongs to the bacterial ribosomal protein bS1 family.

Functionally, binds mRNA; thus facilitating recognition of the initiation point. It is needed to translate mRNA with a short Shine-Dalgarno (SD) purine-rich sequence. This is Small ribosomal subunit protein bS1 (rpsA) from Buchnera aphidicola subsp. Acyrthosiphon pisum (strain APS) (Acyrthosiphon pisum symbiotic bacterium).